Reading from the N-terminus, the 123-residue chain is Large ribosomal subunit protein bL12 (123 aa).

The protein belongs to the bacterial ribosomal protein bL12 family. In terms of assembly, homodimer. Part of the ribosomal stalk of the 50S ribosomal subunit. Forms a multimeric L10(L12)X complex, where L10 forms an elongated spine to which 2 to 4 L12 dimers bind in a sequential fashion. Binds GTP-bound translation factors.

Forms part of the ribosomal stalk which helps the ribosome interact with GTP-bound translation factors. Is thus essential for accurate translation. This Bartonella henselae (strain ATCC 49882 / DSM 28221 / CCUG 30454 / Houston 1) (Rochalimaea henselae) protein is Large ribosomal subunit protein bL12.